We begin with the raw amino-acid sequence, 419 residues long: Effector protein BipC (419 aa).

Disordered stretches follow at residues 62-91 (VAGS…TVSG) and 338-402 (LQSG…AKSQ). 2 stretches are compositionally biased toward basic and acidic residues: residues 71-91 (ELAR…TVSG) and 380-392 (TRDE…REAA).

It belongs to the SctB/SipC family.

It localises to the secreted. In Burkholderia pseudomallei (strain 1106a), this protein is Effector protein BipC (bipC).